Consider the following 260-residue polypeptide: Transforming acid coiled-coil-containing protein 1 (260 aa).

Positions 1-43 (MSLNTTFTKEDGTEVVIPFNGSQNGHPENEEPEVEEAAEPSSS) are disordered. Positions 108–249 (ASSEELEKAL…CDQLLNDVDV (142 aa)) form a coiled coil.

The protein belongs to the TACC family. Interacts with zyg-9 to form a heterodimer. Interacts with zyg-8 to form a heterodimer. Interacts with efa-6 (via N-terminus). Expressed in touch neurons.

Its subcellular location is the cytoplasm. It is found in the cytoskeleton. It localises to the spindle pole. The protein localises to the microtubule organizing center. The protein resides in the centrosome. Its subcellular location is the chromosome. It is found in the centromere. It localises to the kinetochore. The protein localises to the cell projection. The protein resides in the axon. Its subcellular location is the perikaryon. Its function is as follows. Involved in microtubule formation, polymerization and assembly, regulating microtubule nucleation and length. Plays a role in pronuclear migration and mitotic and meiotic spindle elongation during early embryogenesis. In complex with zyg-9, functions during the early stages of embryonic development to regulate microtubule assembly throughout the cell cycle. Specifically, the complex is required for the formation and growth of astral microtubules and spindle microtubules during mitotic spindle assembly. At anaphase, the complex is required for mitotic spindle positioning in one-cell stage embryos. The complex acts in a partially redundant manner with the tac-1/zyg-8 complex to regulate microtubule assembly and processes during interphase, mitosis and meiosis in embryos. Plays a role in injury-induced axonal regrowth, regeneration and microtubule stability in PLM neurons and this may be downstream of efa-6. The chain is Transforming acid coiled-coil-containing protein 1 from Caenorhabditis elegans.